The primary structure comprises 209 residues: Orotate phosphoribosyltransferase (209 aa).

Residues Arg-96, Lys-100, His-102, and 122–130 (EDLISTGGS) each bind 5-phospho-alpha-D-ribose 1-diphosphate. Position 126 (Ser-126) interacts with orotate.

The protein belongs to the purine/pyrimidine phosphoribosyltransferase family. PyrE subfamily. Homodimer. It depends on Mg(2+) as a cofactor.

It catalyses the reaction orotidine 5'-phosphate + diphosphate = orotate + 5-phospho-alpha-D-ribose 1-diphosphate. The protein operates within pyrimidine metabolism; UMP biosynthesis via de novo pathway; UMP from orotate: step 1/2. Functionally, catalyzes the transfer of a ribosyl phosphate group from 5-phosphoribose 1-diphosphate to orotate, leading to the formation of orotidine monophosphate (OMP). The polypeptide is Orotate phosphoribosyltransferase (Streptococcus pyogenes serotype M3 (strain ATCC BAA-595 / MGAS315)).